Consider the following 178-residue polypeptide: ATP-dependent protease subunit HslV (178 aa).

Residue threonine 7 is part of the active site. 3 residues coordinate Na(+): glycine 162, cysteine 165, and threonine 168.

It belongs to the peptidase T1B family. HslV subfamily. A double ring-shaped homohexamer of HslV is capped on each side by a ring-shaped HslU homohexamer. The assembly of the HslU/HslV complex is dependent on binding of ATP.

The protein localises to the cytoplasm. The enzyme catalyses ATP-dependent cleavage of peptide bonds with broad specificity.. Its activity is regulated as follows. Allosterically activated by HslU binding. Functionally, protease subunit of a proteasome-like degradation complex believed to be a general protein degrading machinery. The polypeptide is ATP-dependent protease subunit HslV (Cupriavidus taiwanensis (strain DSM 17343 / BCRC 17206 / CCUG 44338 / CIP 107171 / LMG 19424 / R1) (Ralstonia taiwanensis (strain LMG 19424))).